A 168-amino-acid polypeptide reads, in one-letter code: Phosphopantetheine adenylyltransferase (168 aa).

Residue Thr-9 participates in substrate binding. Residues 9-10 (TF) and His-17 contribute to the ATP site. Substrate-binding residues include Lys-41, Leu-73, and Arg-87. ATP is bound by residues 88–90 (GLR), Glu-98, and 123–129 (YQFISGT).

Belongs to the bacterial CoaD family. As to quaternary structure, homohexamer. Requires Mg(2+) as cofactor.

It localises to the cytoplasm. The enzyme catalyses (R)-4'-phosphopantetheine + ATP + H(+) = 3'-dephospho-CoA + diphosphate. It participates in cofactor biosynthesis; coenzyme A biosynthesis; CoA from (R)-pantothenate: step 4/5. In terms of biological role, reversibly transfers an adenylyl group from ATP to 4'-phosphopantetheine, yielding dephospho-CoA (dPCoA) and pyrophosphate. The chain is Phosphopantetheine adenylyltransferase from Ralstonia nicotianae (strain ATCC BAA-1114 / GMI1000) (Ralstonia solanacearum).